Consider the following 1049-residue polypeptide: Self-sufficient cytochrome P450 monooxygenase CYP505E4 (1049 aa).

C405 provides a ligand contact to heme. Residues 462 to 492 (ATALSQHNMSAGATSSPGSSAHPAGNKNAQD) form a disordered region. Low complexity predominate over residues 471 to 486 (SAGATSSPGSSAHPAG). Residues 499–640 (ISFFYGSNSG…DLEVWEETNL (142 aa)) form the Flavodoxin-like domain. FMN-binding positions include 505-509 (SNSGT) and 584-616 (VFGC…TRLT). The FAD-binding FR-type domain maps to 678-906 (RDLIEGKVTA…RPAKEAFHLP (229 aa)).

In the N-terminal section; belongs to the cytochrome P450 family. FAD serves as cofactor. Requires FMN as cofactor. Heme is required as a cofactor.

The catalysed reaction is 2 oxidized [cytochrome P450] + NADPH = 2 reduced [cytochrome P450] + NADP(+) + H(+). The enzyme catalyses an organic molecule + reduced [NADPH--hemoprotein reductase] + O2 = an alcohol + oxidized [NADPH--hemoprotein reductase] + H2O + H(+). It catalyses the reaction dodecanoate + reduced [NADPH--hemoprotein reductase] + O2 = 5-hydroxydodecanoate + oxidized [NADPH--hemoprotein reductase] + H2O + H(+). It carries out the reaction tetradecanoate + reduced [NADPH--hemoprotein reductase] + O2 = 7-hydroxytetradecanoate + oxidized [NADPH--hemoprotein reductase] + H2O + H(+). The catalysed reaction is dodecan-1-ol + reduced [NADPH--hemoprotein reductase] + O2 = 1,5-dodecanediol + oxidized [NADPH--hemoprotein reductase] + H2O + H(+). The enzyme catalyses dodecan-1-ol + reduced [NADPH--hemoprotein reductase] + O2 = 1,4-dodecanediol + oxidized [NADPH--hemoprotein reductase] + H2O + H(+). It catalyses the reaction dodecan-1-ol + reduced [NADPH--hemoprotein reductase] + O2 = 1,6-dodecanediol + oxidized [NADPH--hemoprotein reductase] + H2O + H(+). Its function is as follows. Self-sufficient cytochrome P450 monooxygenase that catalyzes the regioselective in-chain hydroxylation of alkanes, fatty alcohols, and fatty acids at the omega-7 position. Performs hydroxylation of C10-C16 n-alkanes and C12 and C14 fatty alcohols; and thereby enables the one step biocatalytic synthesis of rare alcohols such as 5-dodecanol and 7-tetradecanol. Converts 1-dodecanol into 1,5-dodecanediol as major product with very little sub-terminally hydroxylated products with the 1,4-dodecanediol and 1,6-dodecanediol more abundant. Converts dodecanoic acid to 5-hydroxydodecanoic acid which can be further converted into delta-dodecalactone by lactonization of the 5-hydroxy acid at low pH. Also gives sub-terminal hydroxylation of dodecanoic acid with 9-hydroxydodecanoic acid being the second most abundant product. This Penicillium freii protein is Self-sufficient cytochrome P450 monooxygenase CYP505E4.